A 610-amino-acid polypeptide reads, in one-letter code: UvrABC system protein C (610 aa).

The GIY-YIG domain occupies 16 to 94 (SQPGVYRMYD…IKLYQPRYNV (79 aa)). One can recognise a UVR domain in the interval 204 to 239 (DQVLTQLIARMEKASQDLAFEEAARIRDQIQAVRRV).

Belongs to the UvrC family. In terms of assembly, interacts with UvrB in an incision complex.

Its subcellular location is the cytoplasm. In terms of biological role, the UvrABC repair system catalyzes the recognition and processing of DNA lesions. UvrC both incises the 5' and 3' sides of the lesion. The N-terminal half is responsible for the 3' incision and the C-terminal half is responsible for the 5' incision. This chain is UvrABC system protein C, found in Salmonella paratyphi C (strain RKS4594).